Consider the following 177-residue polypeptide: Nucleoside triphosphate/diphosphate phosphatase (177 aa).

Arg23 functions as the Proton donor in the catalytic mechanism. Mg(2+)-binding residues include Asn87, Asp103, Asp105, Asp107, Asp120, and Glu123.

Belongs to the Ntdp family. Requires Mg(2+) as cofactor.

It catalyses the reaction a ribonucleoside 5'-triphosphate + H2O = a ribonucleoside 5'-diphosphate + phosphate + H(+). The enzyme catalyses a ribonucleoside 5'-diphosphate + H2O = a ribonucleoside 5'-phosphate + phosphate + H(+). In terms of biological role, has nucleoside phosphatase activity towards nucleoside triphosphates and nucleoside diphosphates. The polypeptide is Nucleoside triphosphate/diphosphate phosphatase (Enterococcus faecalis (strain ATCC 700802 / V583)).